Here is a 73-residue protein sequence, read N- to C-terminus: MQIKHLITLFFLVLIVADQCSAFLSLIPSLVGGSISAFKGRRKREISAQIEQYKDLQKREAELEELLDRLPMY.

Residues 1-22 (MQIKHLITLFFLVLIVADQCSA) form the signal peptide. Lysine 39 carries the post-translational modification Lysine amide. The propeptide occupies 45-73 (EISAQIEQYKDLQKREAELEELLDRLPMY).

As to expression, expressed by the venom gland.

The protein resides in the secreted. Has a low antimicrobial activity against S.aureus, E.coli, and C.albicans (MICs 120-160 uM). Has a low hemolytic activity (4% at 160 uM). Also inhibits the growth of two cancer cell lines on a total of five (the squamous carcinoma cell line H157 (IC(50)=55.9 uM) and the lung adenocarcinoma cell line H838 (IC(50)=52.5 uM)). This Tityus serrulatus (Brazilian scorpion) protein is Antimicrobial peptide TsAP-1.